A 316-amino-acid polypeptide reads, in one-letter code: Adenine deaminase (316 aa).

Zn(2+) is bound by residues His14, His16, and His194. Glu197 serves as the catalytic Proton donor. Residue Asp275 coordinates Zn(2+). Asp276 contributes to the substrate binding site.

It belongs to the metallo-dependent hydrolases superfamily. Adenosine and AMP deaminases family. Adenine deaminase type 2 subfamily. It depends on Zn(2+) as a cofactor.

The enzyme catalyses adenine + H2O + H(+) = hypoxanthine + NH4(+). In terms of biological role, catalyzes the hydrolytic deamination of adenine to hypoxanthine. Plays an important role in the purine salvage pathway and in nitrogen catabolism. This is Adenine deaminase from Pseudomonas aeruginosa (strain UCBPP-PA14).